The following is a 311-amino-acid chain: Glutaminase (311 aa).

Substrate is bound by residues Ser-66, Asn-116, Glu-162, Asn-169, Tyr-193, Tyr-245, and Val-263.

Belongs to the glutaminase family. As to quaternary structure, homotetramer.

The catalysed reaction is L-glutamine + H2O = L-glutamate + NH4(+). The chain is Glutaminase from Rhodopseudomonas palustris (strain ATCC BAA-98 / CGA009).